The sequence spans 689 residues: Glycine--tRNA ligase beta subunit (689 aa).

Belongs to the class-II aminoacyl-tRNA synthetase family. In terms of assembly, tetramer of two alpha and two beta subunits.

The protein localises to the cytoplasm. The enzyme catalyses tRNA(Gly) + glycine + ATP = glycyl-tRNA(Gly) + AMP + diphosphate. This chain is Glycine--tRNA ligase beta subunit, found in Shewanella halifaxensis (strain HAW-EB4).